A 99-amino-acid polypeptide reads, in one-letter code: A-type ATP synthase subunit F (99 aa).

This sequence belongs to the V-ATPase F subunit family. As to quaternary structure, has multiple subunits with at least A(3), B(3), C, D, E, F, H, I and proteolipid K(x).

The protein localises to the cell membrane. In terms of biological role, component of the A-type ATP synthase that produces ATP from ADP in the presence of a proton gradient across the membrane. In Methanococcoides burtonii (strain DSM 6242 / NBRC 107633 / OCM 468 / ACE-M), this protein is A-type ATP synthase subunit F.